Here is a 1269-residue protein sequence, read N- to C-terminus: Rho GTPase-activating protein 29 (1269 aa).

A phosphoserine mark is found at Ser171, Ser176, Ser179, and Ser190. The region spanning 192–462 (IELDSMLLKN…SAKLYDPGQE (271 aa)) is the F-BAR domain. Residues 296-418 (RKNEMEKQRK…EILTQLRKLV (123 aa)) are a coiled coil. Disordered stretches follow at residues 472-523 (SAEE…NSAD) and 540-599 (DSES…NSLG). Phosphoserine occurs at positions 499, 519, and 552. Over residues 540–559 (DSESTGGSSESRSLDSESIS) the composition is skewed to low complexity. A Phorbol-ester/DAG-type zinc finger spans residues 612 to 657 (THKFRKLRSPTKCRDCEGIVVFHGVECEECLLVCHRKCLENLVIIC). A Rho-GAP domain is found at 671-886 (AEFTQVAKKE…FLITYSQKIF (216 aa)). The disordered stretch occupies residues 909-936 (PGYLPKSLLSPEERDPERSMKSLFFSSK). Ser918 is modified (phosphoserine). Residues 919–928 (PEERDPERSM) are compositionally biased toward basic and acidic residues. A phosphoserine mark is found at Ser954 and Ser1026. Residues 1120–1269 (RSSGDHPVSI…DLEDEIPQFV (150 aa)) are disordered. Polar residues predominate over residues 1128–1145 (SITQPSKPYTEPVRSTRQ). Residues Ser1152 and Ser1154 each carry the phosphoserine modification. The segment covering 1162-1172 (TPRTLQPQHWT) has biased composition (polar residues). Residues 1229–1241 (SRPEEKAEERDQP) are compositionally biased toward basic and acidic residues. Residues 1259–1269 (EDLEDEIPQFV) are compositionally biased toward acidic residues. The segment at 1266–1269 (PQFV) is interaction with PTPN13/PTPL1.

In terms of assembly, interacts with PTPN13/PTPL1. Interacts with RAP2A via its coiled coil domain. Interacts with RASIP1.

Its function is as follows. GTPase activator for the Rho-type GTPases by converting them to an inactive GDP-bound state. Has strong activity toward RHOA, and weaker activity toward RAC1 and CDC42. May act as a specific effector of RAP2A to regulate Rho. In concert with RASIP1, suppresses RhoA signaling and dampens ROCK and MYH9 activities in endothelial cells and plays an essential role in blood vessel tubulogenesis. The sequence is that of Rho GTPase-activating protein 29 (ARHGAP29) from Bos taurus (Bovine).